We begin with the raw amino-acid sequence, 116 residues long: Ribonuclease P protein component (116 aa).

This sequence belongs to the RnpA family. Consists of a catalytic RNA component (M1 or rnpB) and a protein subunit.

The enzyme catalyses Endonucleolytic cleavage of RNA, removing 5'-extranucleotides from tRNA precursor.. Functionally, RNaseP catalyzes the removal of the 5'-leader sequence from pre-tRNA to produce the mature 5'-terminus. It can also cleave other RNA substrates such as 4.5S RNA. The protein component plays an auxiliary but essential role in vivo by binding to the 5'-leader sequence and broadening the substrate specificity of the ribozyme. This is Ribonuclease P protein component from Picosynechococcus sp. (strain ATCC 27264 / PCC 7002 / PR-6) (Agmenellum quadruplicatum).